Reading from the N-terminus, the 537-residue chain is Zinc finger protein Noc (537 aa).

Disordered stretches follow at residues 64-116 and 138-212; these read NKTK…SLSN and NQNS…PIVR. Over residues 70–116 the composition is skewed to low complexity; that stretch reads ACSSSSNSSSSSGSAEISAAKSPSGQAKSPKSSTPISSTATSASLSN. Phosphoserine is present on residues Ser-98 and Ser-157. Composition is skewed to polar residues over residues 138–177 and 188–206; these read NQNS…NATP and HDSS…SQRG. Residue Ser-208 is modified to Phosphoserine. A C2H2-type zinc finger spans residues 402 to 430; sequence YVCSWVVGDAYCGKRFQTSDELFSHLRTH.

The protein belongs to the Elbow/Noc family. In terms of assembly, interacts with elB. As to expression, highly expressed in the adult head.

Functionally, may negatively regulate Notch-induced cell proliferation in the eye-head primordium. Required for development of the supraesophageal ganglion and ocelli. May act in leg and wing primordia to negatively regulate body-wall specifying genes and thereby promote appendage formation. Plays a role in tracheal development. This Drosophila melanogaster (Fruit fly) protein is Zinc finger protein Noc (noc).